A 271-amino-acid polypeptide reads, in one-letter code: Tryptophan synthase alpha chain (271 aa).

Residues glutamate 56 and aspartate 67 each act as proton acceptor in the active site.

The protein belongs to the TrpA family. In terms of assembly, tetramer of two alpha and two beta chains.

The enzyme catalyses (1S,2R)-1-C-(indol-3-yl)glycerol 3-phosphate + L-serine = D-glyceraldehyde 3-phosphate + L-tryptophan + H2O. It functions in the pathway amino-acid biosynthesis; L-tryptophan biosynthesis; L-tryptophan from chorismate: step 5/5. Its function is as follows. The alpha subunit is responsible for the aldol cleavage of indoleglycerol phosphate to indole and glyceraldehyde 3-phosphate. This chain is Tryptophan synthase alpha chain, found in Mycolicibacterium paratuberculosis (strain ATCC BAA-968 / K-10) (Mycobacterium paratuberculosis).